The chain runs to 237 residues: 7-cyano-7-deazaguanine synthase (237 aa).

15–25 (LSGGMDSTVCA) is an ATP binding site. Positions 197, 205, 208, and 211 each coordinate Zn(2+).

This sequence belongs to the QueC family. Zn(2+) is required as a cofactor.

The enzyme catalyses 7-carboxy-7-deazaguanine + NH4(+) + ATP = 7-cyano-7-deazaguanine + ADP + phosphate + H2O + H(+). It functions in the pathway purine metabolism; 7-cyano-7-deazaguanine biosynthesis. Functionally, catalyzes the ATP-dependent conversion of 7-carboxy-7-deazaguanine (CDG) to 7-cyano-7-deazaguanine (preQ(0)). This is 7-cyano-7-deazaguanine synthase from Koribacter versatilis (strain Ellin345).